The sequence spans 590 residues: Cytidine monophosphate-N-acetylneuraminic acid hydroxylase (590 aa).

The 99-residue stretch at 14–112 (LSPVEVASLK…VEMDENNRLL (99 aa)) folds into the Rieske domain. [2Fe-2S] cluster is bound by residues C54, H56, C75, and H78.

This sequence belongs to the CMP-Neu5Ac hydroxylase family. It depends on [2Fe-2S] cluster as a cofactor.

The protein localises to the cytoplasm. The enzyme catalyses CMP-N-acetyl-beta-neuraminate + 2 Fe(II)-[cytochrome b5] + O2 + 2 H(+) = CMP-N-glycoloyl-beta-neuraminate + 2 Fe(III)-[cytochrome b5] + H2O. It participates in amino-sugar metabolism; N-acetylneuraminate metabolism. Sialic acids are components of carbohydrate chains of glycoconjugates and are involved in cell-cell recognition and cell-pathogen interactions. Catalyzes the conversion of CMP-N-acetylneuraminic acid (CMP-Neu5Ac) into its hydroxylated derivative CMP-N-glycolylneuraminic acid (CMP-Neu5Gc), a sialic acid abundantly expressed at the surface of many cells. This chain is Cytidine monophosphate-N-acetylneuraminic acid hydroxylase, found in Pan troglodytes (Chimpanzee).